Here is a 342-residue protein sequence, read N- to C-terminus: Ribosomal RNA small subunit methyltransferase C (342 aa).

It belongs to the methyltransferase superfamily. RsmC family. As to quaternary structure, monomer.

It localises to the cytoplasm. It carries out the reaction guanosine(1207) in 16S rRNA + S-adenosyl-L-methionine = N(2)-methylguanosine(1207) in 16S rRNA + S-adenosyl-L-homocysteine + H(+). Functionally, specifically methylates the guanine in position 1207 of 16S rRNA in the 30S particle. This is Ribosomal RNA small subunit methyltransferase C from Salmonella enteritidis PT4 (strain P125109).